Reading from the N-terminus, the 591-residue chain is MHAYRSHTCTELNAAHVGQEVRLSGWVHRVRDHGGVLFLDLRDHYGITQVIADADSPAFAELETVRAEWVIRIEGRVKARDASLVNPKLATGEIEVYATGMSVLGAADELPLPVFGETDYPEETRLTYRFLDLRREKLHQNMMLRSNVVRSLRNRMWGAGFNEFQTPIITASSPEGARDFLVPSRLHPGKFYALPQAPQQFKQLIMVAGFDRYFQIAPCFRDEDPRADRSPTDFYQLDIEMSFVEQEDVFAAVQPVIQGLFEEFGHGKRVEADWPRIAYRDAMLWYGSDKPDLRNPIKMQVVSEHFAGSGFAIFAKLLENEGTEIRAIPAPTGGSRKFCDRMNAFAQSQGLPGMGYIFWRKGDDGAMEAAGPLAKNIGPERTEAIRQQLGLGEGDAAFFLGGKPETFEAVAGRARTEIGRELGLTEENCFKFAWIVDFPMYEKDDEGKIDFSHNPFSMPQGGMEALEGDPLKVHAYQYDLACNGYELISGGIRNHKPEIMFKAFELAGYPKEEVEKRFGGMVKAFRYGAPPHGGCAAGIDRIVMLLADEANIREVIMFPMNQRAEDLLMGAPSEPTNEQLRELRLRVVPKD.

Residue Glu-175 coordinates L-aspartate. The tract at residues 199 to 202 (QQFK) is aspartate. L-aspartate-binding residues include Arg-221 and His-453. 221-223 (RDE) is a binding site for ATP. Glu-486 is a binding site for ATP. Arg-493 is an L-aspartate binding site. 538 to 541 (GIDR) contacts ATP.

The protein belongs to the class-II aminoacyl-tRNA synthetase family. Type 1 subfamily. Homodimer.

The protein resides in the cytoplasm. It catalyses the reaction tRNA(Asx) + L-aspartate + ATP = L-aspartyl-tRNA(Asx) + AMP + diphosphate. Functionally, aspartyl-tRNA synthetase with relaxed tRNA specificity since it is able to aspartylate not only its cognate tRNA(Asp) but also tRNA(Asn). Reaction proceeds in two steps: L-aspartate is first activated by ATP to form Asp-AMP and then transferred to the acceptor end of tRNA(Asp/Asn). This is Aspartate--tRNA(Asp/Asn) ligase from Cereibacter sphaeroides (strain KD131 / KCTC 12085) (Rhodobacter sphaeroides).